Consider the following 177-residue polypeptide: ATP synthase subunit delta (177 aa).

Belongs to the ATPase delta chain family. F-type ATPases have 2 components, F(1) - the catalytic core - and F(0) - the membrane proton channel. F(1) has five subunits: alpha(3), beta(3), gamma(1), delta(1), epsilon(1). F(0) has three main subunits: a(1), b(2) and c(10-14). The alpha and beta chains form an alternating ring which encloses part of the gamma chain. F(1) is attached to F(0) by a central stalk formed by the gamma and epsilon chains, while a peripheral stalk is formed by the delta and b chains.

Its subcellular location is the cell inner membrane. Functionally, f(1)F(0) ATP synthase produces ATP from ADP in the presence of a proton or sodium gradient. F-type ATPases consist of two structural domains, F(1) containing the extramembraneous catalytic core and F(0) containing the membrane proton channel, linked together by a central stalk and a peripheral stalk. During catalysis, ATP synthesis in the catalytic domain of F(1) is coupled via a rotary mechanism of the central stalk subunits to proton translocation. Its function is as follows. This protein is part of the stalk that links CF(0) to CF(1). It either transmits conformational changes from CF(0) to CF(1) or is implicated in proton conduction. This is ATP synthase subunit delta from Vibrio alginolyticus.